The following is a 169-amino-acid chain: Putative cysteine protease YraA (169 aa).

Residues 3–169 (KKIAVLVTDQ…FNRESLNLLK (167 aa)) enclose the PfpI endopeptidase domain. The Nucleophile role is filled by C103. H104 is an active-site residue.

The protein belongs to the peptidase C56 family.

Its function is as follows. Functions in the protection against aldehyde-stress, possibly by degrading damaged proteins. This Bacillus subtilis (strain 168) protein is Putative cysteine protease YraA (yraA).